A 320-amino-acid polypeptide reads, in one-letter code: Transcription factor bHLH96 (320 aa).

A disordered region spans residues 30 to 121 (EEEDQDPQDT…RSSKNKEEIE (92 aa)). Residues 65–76 (YSDDYNYNEEDL) are compositionally biased toward acidic residues. A compositionally biased stretch (basic residues) spans 104–114 (GRRKRRRTRSS). One can recognise a bHLH domain in the interval 122-173 (NQRMTHIAVERNRRKQMNEYLAVLRSLMPPYYAQRGDQASIVGGAINYLKEL). A disordered region spans residues 184–206 (VKTATEDTGAGHDQTKTTSASSS). Residues 244-320 (SLKILAKKRP…RRIEEESSFS (77 aa)) form the ACT domain.

Homodimer. Expressed constitutively in roots, leaves, stems, and flowers.

The protein localises to the nucleus. This Arabidopsis thaliana (Mouse-ear cress) protein is Transcription factor bHLH96 (BHLH96).